Here is a 129-residue protein sequence, read N- to C-terminus: Transcriptional activator protein (129 aa).

Residues 1-20 (MRSSSPSQPPSIKRAHRQAK) form a disordered region. The Nuclear localization signal signature appears at 13–28 (KRAHRQAKKRAIRRRR). A zinc finger spans residues 33–50 (CGCSIYFHLGCAGHGFTH). Positions 73 to 118 (LFQDTQSRGPTVYQNEGIPRTDTVQPQPEESVASPQSLPELPSLDD) are disordered. Composition is skewed to polar residues over residues 74-86 (FQDT…TVYQ) and 94-109 (DTVQ…SPQS). Serine 109 carries the phosphoserine; by host modification. The tract at residues 115–129 (SLDDVDDSFWINLFS) is transactivation.

Belongs to the geminiviridae transcriptional activator protein family. Monomer. Homodimer. Homooligomer. Self-interaction correlates with nuclear localization and efficient activation of transcription. Monomers suppress local silencing by interacting with and inactivating host adenosine kinase 2 (ADK2) in the cytoplasm. Interacts with and inhibits host SNF1 kinase. Phosphorylated at Ser-109 by A.thaliana KIN10.

The protein resides in the host nucleus. The protein localises to the host cytoplasm. Functionally, strong activator of the late viral genes promoters. Enhances the expression of the capsid protein and nuclear shuttle protein. Acts as a suppressor of RNA-mediated gene silencing, also known as post-transcriptional gene silencing (PTGS), a mechanism of plant viral defense that limits the accumulation of viral RNAs. Suppresses the host RNA silencing by inhibiting adenosine kinase 2 (ADK2), a kinase involved in a general methylation pathway. Also suppresses the host basal defense by interacting with and inhibiting SNF1 kinase, a key regulator of cell metabolism implicated in innate antiviral defense. Determines pathogenicity. In Nicotiana tabacum (Common tobacco), this protein is Transcriptional activator protein.